We begin with the raw amino-acid sequence, 174 residues long: Protein C2-DOMAIN ABA-RELATED 2 (174 aa).

Position 1 is an N-acetylmethionine (methionine 1). A C2 domain is found at 1–104 (MENMLGLLRL…EAIRIQNQLG (104 aa)). Positions 21, 22, 27, 73, 74, 75, and 81 each coordinate Ca(2+).

The protein belongs to the plant CAR protein family. As to quaternary structure, binds to PYR/PYL/RCAR abscisic acid intracellular receptors in an ABA-independent manner, both at the plasma membrane and in the nucleus. Ca(2+) serves as cofactor.

It localises to the cell membrane. It is found in the nucleus. Its function is as follows. Stimulates the GTPase/ATPase activities of Obg-like ATPases. Mediates the transient calcium-dependent interaction of PYR/PYL/RCAR abscisic acid (ABA) receptors with the plasma membrane and thus regulates ABA sensitivity. The protein is Protein C2-DOMAIN ABA-RELATED 2 of Arabidopsis thaliana (Mouse-ear cress).